The chain runs to 557 residues: Chaperonin GroEL 1 (557 aa).

ATP contacts are provided by residues 29–32, Lys50, 86–90, Gly416, and Asp495; these read TLGP and DGTTT.

This sequence belongs to the chaperonin (HSP60) family. Forms a cylinder of 14 subunits composed of two heptameric rings stacked back-to-back. Interacts with the co-chaperonin GroES.

It is found in the cytoplasm. The catalysed reaction is ATP + H2O + a folded polypeptide = ADP + phosphate + an unfolded polypeptide.. In terms of biological role, together with its co-chaperonin GroES, plays an essential role in assisting protein folding. The GroEL-GroES system forms a nano-cage that allows encapsulation of the non-native substrate proteins and provides a physical environment optimized to promote and accelerate protein folding. This is Chaperonin GroEL 1 from Protochlamydia amoebophila (strain UWE25).